The sequence spans 646 residues: ATP-dependent zinc metalloprotease FtsH (646 aa).

The segment at 1-27 is disordered; that stretch reads MTNNQTDRPRPPGPESRRFDNNDKNNR. The Cytoplasmic segment spans residues 1-35; sequence MTNNQTDRPRPPGPESRRFDNNDKNNRNRWGPIPS. Positions 7 to 26 are enriched in basic and acidic residues; it reads DRPRPPGPESRRFDNNDKNN. A helical membrane pass occupies residues 36–56; the sequence is WAWIVLIVALLLNWLVAPILF. Residues 57-144 lie on the Extracellular side of the membrane; that stretch reads PEGKGAVSIP…QPESSTRSLL (88 aa). A helical transmembrane segment spans residues 145-165; that stretch reads LSILISFGPTILFFLLFLWLI. Topologically, residues 166–646 are cytoplasmic; sequence SKAQSSQQGL…GLGEKQPEPA (481 aa). 237–244 provides a ligand contact to ATP; that stretch reads GPPGTGKT. His-459 contributes to the Zn(2+) binding site. The active site involves Glu-460. Zn(2+) contacts are provided by His-463 and Asp-535.

This sequence in the central section; belongs to the AAA ATPase family. In the C-terminal section; belongs to the peptidase M41 family. In terms of assembly, homohexamer. It depends on Zn(2+) as a cofactor.

The protein resides in the cell membrane. Functionally, acts as a processive, ATP-dependent zinc metallopeptidase for both cytoplasmic and membrane proteins. Plays a role in the quality control of integral membrane proteins. This is ATP-dependent zinc metalloprotease FtsH from Thermobaculum terrenum (strain ATCC BAA-798 / CCMEE 7001 / YNP1).